A 1101-amino-acid chain; its full sequence is Leucine-rich repeat receptor-like serine/threonine-protein kinase At1g17230 (1101 aa).

The N-terminal stretch at 1–23 (MRGRICFLAIVILCSFSFILVRS) is a signal peptide. The Extracellular portion of the chain corresponds to 24–734 (LNEEGRVLLE…WLINGSQRQK (711 aa)). N-linked (GlcNAc...) asparagine glycans are attached at residues Asn-39, Asn-57, Asn-78, and Asn-97. LRR repeat units follow at residues 66–90 (LRTV…ICKL), 91–115 (HGLR…SLCR), 117–137 (LEVL…QLTM), 138–162 (IITL…IGNL), 163–186 (SSLQ…MAKL), 188–210 (QLRI…ISGC), 211–234 (ESLK…LEKL), 235–258 (QNLT…VGNI), 260–282 (RLEV…IGKL), 283–306 (TKMK…IGNL), 308–329 (DAAE…EFGH), 330–354 (ILNL…LGEL), 355–379 (TLLE…QFLP), 381–402 (LVDL…IGFY), 403–426 (SNFS…FCRF), 427–450 (QTLI…LKTC), 451–474 (KSLT…LFNL), 476–498 (NLTA…LGKL), 499–522 (KNLE…IGNL), 524–546 (KIVG…LGSC), 548–569 (TIQR…ELGQ), 570–593 (LVYL…SFGD), 595–618 (TRLM…LGKL), 619–643 (TSLQ…LGNL), 644–667 (QMLE…IGNL), and 669–692 (SLLI…VFQR). Asn-161 and Asn-174 each carry an N-linked (GlcNAc...) asparagine glycan. N-linked (GlcNAc...) asparagine glycosylation is found at Asn-236 and Asn-257. Asn-368 is a glycosylation site (N-linked (GlcNAc...) asparagine). Asn-404 carries an N-linked (GlcNAc...) asparagine glycan. N-linked (GlcNAc...) asparagine glycans are attached at residues Asn-476, Asn-490, Asn-510, Asn-521, and Asn-529. N-linked (GlcNAc...) asparagine glycans are attached at residues Asn-626 and Asn-631. Asn-674 and Asn-728 each carry an N-linked (GlcNAc...) asparagine glycan. The helical transmembrane segment at 735–755 (ILTITCIVIGSVFLITFLGLC) threads the bilayer. Topologically, residues 756 to 1101 (WTIKRREPAF…LEEANSSKEI (346 aa)) are cytoplasmic. Phosphothreonine is present on residues Thr-788 and Thr-796. One can recognise a Protein kinase domain in the interval 799–1081 (FSEDVVLGRG…ITEARGSSSL (283 aa)). ATP contacts are provided by residues 805–813 (LGRGACGTV) and Lys-827. A phosphotyrosine mark is found at Tyr-874 and Tyr-913. Asp-926 acts as the Proton acceptor in catalysis. Position 960 is a phosphoserine (Ser-960). Phosphotyrosine occurs at positions 968 and 975. The residue at position 976 (Thr-976) is a Phosphothreonine. The disordered stretch occupies residues 1076-1101 (RGSSSLSSSSITSETPLEEANSSKEI). Positions 1078–1088 (SSSLSSSSITS) are enriched in low complexity.

The protein belongs to the protein kinase superfamily. Ser/Thr protein kinase family.

It localises to the cell membrane. It carries out the reaction L-seryl-[protein] + ATP = O-phospho-L-seryl-[protein] + ADP + H(+). The enzyme catalyses L-threonyl-[protein] + ATP = O-phospho-L-threonyl-[protein] + ADP + H(+). The polypeptide is Leucine-rich repeat receptor-like serine/threonine-protein kinase At1g17230 (Arabidopsis thaliana (Mouse-ear cress)).